Consider the following 458-residue polypeptide: Putative non-structural protein 2 (458 aa).

A compositionally biased stretch (basic and acidic residues) spans 1-12; the sequence is MSDTNEENRDEP. The segment at 1–27 is disordered; the sequence is MSDTNEENRDEPTVVIVGPNDAQTETT.

This is Putative non-structural protein 2 (S8) from Micromonas pusilla (Picoplanktonic green alga).